The primary structure comprises 793 residues: Toll-like receptor 2 type-1 (793 aa).

The N-terminal stretch at M1–A25 is a signal peptide. The Extracellular portion of the chain corresponds to A26–S597. A disulfide bridge connects residues C41 and C47. N-linked (GlcNAc...) asparagine glycosylation occurs at N48. LRR repeat units lie at residues K64–K85, N88–S109, K112–P133, S136–S157, N161–G182, and F185–S206. An N-linked (GlcNAc...) asparagine glycan is attached at N120. N-linked (GlcNAc...) asparagine glycosylation is found at N161, N195, N254, and N325. C362 and C391 form a disulfide bridge. LRR repeat units follow at residues S370–C391, S397–I418, K423–P444, N446–T467, L468–P486, F487–P508, and N509–S530. Residue N402 is glycosylated (N-linked (GlcNAc...) asparagine). A disulfide bridge connects residues C441 and C463. The N-linked (GlcNAc...) asparagine glycan is linked to N451. One can recognise an LRRCT domain in the interval N542–R596. Residues L598–G618 traverse the membrane as a helical segment. Residues Y619–S793 lie on the Cytoplasmic side of the membrane. The region spanning I648–L791 is the TIR domain.

This sequence belongs to the Toll-like receptor family. In terms of assembly, binds MYD88 (via TIR domain). Post-translationally, N-glycosylated. TLR2-1 is more heavily glycosylated than TLR2-2. Highly expressed in ovary. Detected at lower levels in heart, lung, gizzard and testis.

The protein localises to the membrane. In terms of biological role, participates in the innate immune response to microbial agents. Acts via MYD88 and TRAF6, leading to NF-kappa-B activation, cytokine secretion and the inflammatory response. Does not respond to LPS and responds with less ability than TLR2-2 to mycoplasmal macrophage-activating lipopeptide-2kD (MALP-2). This chain is Toll-like receptor 2 type-1 (TLR2-1), found in Gallus gallus (Chicken).